A 100-amino-acid polypeptide reads, in one-letter code: Urease subunit gamma (100 aa).

This sequence belongs to the urease gamma subunit family. As to quaternary structure, heterotrimer of UreA (gamma), UreB (beta) and UreC (alpha) subunits. Three heterotrimers associate to form the active enzyme.

Its subcellular location is the cytoplasm. It catalyses the reaction urea + 2 H2O + H(+) = hydrogencarbonate + 2 NH4(+). It participates in nitrogen metabolism; urea degradation; CO(2) and NH(3) from urea (urease route): step 1/1. This is Urease subunit gamma from Staphylococcus epidermidis (strain ATCC 35984 / DSM 28319 / BCRC 17069 / CCUG 31568 / BM 3577 / RP62A).